A 94-amino-acid chain; its full sequence is MLTINAVIRKDQGKGASRRLRLANKFPAIVYGGTKAPVAIELDHDIVLNTQTKEGFYTDVLALVIDGKESKVKVQAVQRHSFKPKLTHIDFVRA.

It belongs to the bacterial ribosomal protein bL25 family. As to quaternary structure, part of the 50S ribosomal subunit; part of the 5S rRNA/L5/L18/L25 subcomplex. Contacts the 5S rRNA. Binds to the 5S rRNA independently of L5 and L18.

In terms of biological role, this is one of the proteins that binds to the 5S RNA in the ribosome where it forms part of the central protuberance. The protein is Large ribosomal subunit protein bL25 of Sodalis glossinidius (strain morsitans).